A 606-amino-acid polypeptide reads, in one-letter code: DNA-directed RNA polymerase III subunit RPC3 (606 aa).

The tract at residues 533–554 (LTFCMADILSNIQQFKNDNKIL) is leucine-zipper.

It belongs to the RNA polymerase beta chain family. As to quaternary structure, component of the RNA polymerase III (Pol III) complex consisting of 17 subunits.

It localises to the nucleus. Its function is as follows. DNA-dependent RNA polymerase catalyzes the transcription of DNA into RNA using the four ribonucleoside triphosphates as substrates. Specific core component of RNA polymerase III which synthesizes small RNAs, such as 5S rRNA and tRNAs. In Debaryomyces hansenii (strain ATCC 36239 / CBS 767 / BCRC 21394 / JCM 1990 / NBRC 0083 / IGC 2968) (Yeast), this protein is DNA-directed RNA polymerase III subunit RPC3 (RPC82).